The sequence spans 551 residues: Glucose-6-phosphate isomerase (551 aa).

E349 acts as the Proton donor in catalysis. Catalysis depends on residues H378 and K480.

It belongs to the GPI family.

The protein localises to the cytoplasm. It catalyses the reaction alpha-D-glucose 6-phosphate = beta-D-fructose 6-phosphate. It functions in the pathway carbohydrate biosynthesis; gluconeogenesis. The protein operates within carbohydrate degradation; glycolysis; D-glyceraldehyde 3-phosphate and glycerone phosphate from D-glucose: step 2/4. Functionally, catalyzes the reversible isomerization of glucose-6-phosphate to fructose-6-phosphate. The protein is Glucose-6-phosphate isomerase of Parasynechococcus marenigrum (strain WH8102).